A 1438-amino-acid polypeptide reads, in one-letter code: MMENRNNNNNRDKNPVKRFNKISIGLASPESILAESRGEVLKPETINYRTHKPERDGLFCERIFGPVKDFECACGKYKRIRYKGIVCDRCGVEVTEKKVRRDRVGHINLVVPIAHIWYFRSLPNKIGYILGLPSKKLDMIIYYERYVVIQAGIAQNAEGESIKRLDFLTEEEYLNILDTLPADNQYLDDFDPNKFVAKMGAECIMDLLARINLDELSYDLRHKANNETSKQRKTEALKRLQVVESFRESNKNRENRPEWMIMKVVPVIPPELRPLVPLDGGRFATSDLNDLYRRVIIRNNRLKRLMEIKAPEVILRNEKRMLQESVDSLFDNTRKASAVKTESNRPLKSLSDSLKGKQGRFRQNLLGKRVDYSARSVIVVGPELRLFECGIPKDMAAELYKPFVIRKLIERGIVKTVKSAKKIIDKKEPVVWDILENVIKGHPILLNRAPTLHRLGIQAFQPKLIEGKAIQLHPLVCTAFNADFDGDQMAVHLPLGPEAILEAQLLMLASHNILNPANGAPVTVPSQDMVLGLYYMTKERLTTEGHIILGQDLVFYSAEETNIALNEGRVELNARVKIRAKDFNEEGELVYKIIQTTAGRVLFNEVVPEAAGYINDVLTKKNLRDIIGKILAVTDVPTTAAFLDNIKDMGYKFAFKGGLSFSLGDIRIPEQKTQLIADARAQVEGISGNYNMGLITNNERYNQVIDIWTSANAQLTELAMKNIREDQQGFNSVYMMLDSGARGSKEQIRQLTGMRGLMAKPKKSTAGGGEIIENPILSNFKEGLSILEYFISTHGARKGLADTALKTADAGYLTRRLHDVSQDVIVNIEDCGTLRGVEVSALKKNEEIVESLGERILGRVVLQDVVNPLTNDILVHAGEQITEAIMKVIENSPVEKVEVRSPLVCEATKGICAKCYGRNLATGKMTQRGEAVGVIAAQSIGEPGTQLTLRTFHVGGVAGGISEESNILAKFAGRLEIEDLKTVKGEDGEGNLVDIVISRSTEMKLIDQKTGILLATNNIPYGSSIYVNDAQVVEKGDVICKWDPYNGVIVSEFTGKIAYEDLEQGQSFMVEIDEQTGFQEKVISEGRNKKLIPTLLVYGKNDELIRSYNLPVGAHLMVNDGEKIKAGKILVKIPRRSSKTGDITGGLPRITELLEARNPSNPAVVSEIDGVVSFGKIKRGNREIVIESKFGEIKKYLVKLSSQILVQENDFVRAGVPLSDGAITPDDILRIQGPAAVQQYLVNEIQEVYRLQGVKINDKHFEVVIRQMMRKVRVQDPGDTLFLEDQLIHTKDFIVENDKLYGMKVVEDSGDSSNLKAGQIITPRELRDENSLLKRTDKNLVIARDVITATATPVLQGITRASLQTKSFISAASFQETTKVLNEAAVAGKIDYLEGLKENVIVGHRIPAGTGMREYDHTIVGSKEEYNDLMVAKEEFNY.

Cys72, Cys74, Cys87, and Cys90 together coordinate Zn(2+). Mg(2+) contacts are provided by Asp483, Asp485, and Asp487. Residues Cys831, Cys905, Cys912, and Cys915 each coordinate Zn(2+).

This sequence belongs to the RNA polymerase beta' chain family. In terms of assembly, the RNAP catalytic core consists of 2 alpha, 1 beta, 1 beta' and 1 omega subunit. When a sigma factor is associated with the core the holoenzyme is formed, which can initiate transcription. It depends on Mg(2+) as a cofactor. The cofactor is Zn(2+).

It catalyses the reaction RNA(n) + a ribonucleoside 5'-triphosphate = RNA(n+1) + diphosphate. Its function is as follows. DNA-dependent RNA polymerase catalyzes the transcription of DNA into RNA using the four ribonucleoside triphosphates as substrates. This Flavobacterium psychrophilum (strain ATCC 49511 / DSM 21280 / CIP 103535 / JIP02/86) protein is DNA-directed RNA polymerase subunit beta'.